Reading from the N-terminus, the 130-residue chain is Histone H2A type 1 (130 aa).

The disordered stretch occupies residues 1–22 (MSGRGKQGGKTRAKAKTRSSRA). The residue at position 2 (S2) is an N-acetylserine. Residue S2 is modified to Phosphoserine. K6 is modified (N6-(2-hydroxyisobutyryl)lysine). The residue at position 6 (K6) is an N6-acetyllysine. Residues 7–19 (QGGKTRAKAKTRS) are compositionally biased toward basic residues. K10 bears the N6-(2-hydroxyisobutyryl)lysine; alternate mark. K10 carries the N6-lactoyllysine; alternate modification. K10 carries the post-translational modification N6-succinyllysine. Residues K14 and K16 each participate in a glycyl lysine isopeptide (Lys-Gly) (interchain with G-Cter in ubiquitin) cross-link. The residue at position 37 (K37) is an N6-(2-hydroxyisobutyryl)lysine; alternate. K75 and K76 each carry N6-(2-hydroxyisobutyryl)lysine. K96 is modified (N6-(2-hydroxyisobutyryl)lysine; alternate). An N6-succinyllysine modification is found at K96. An N6-glutaryllysine; alternate modification is found at K96. The residue at position 105 (Q105) is an N5-methylglutamine. At K119 the chain carries N6-(2-hydroxyisobutyryl)lysine; alternate. K119 is subject to N6-glutaryllysine; alternate. K120 is covalently cross-linked (Glycyl lysine isopeptide (Lys-Gly) (interchain with G-Cter in ubiquitin)).

The protein belongs to the histone H2A family. The nucleosome is a histone octamer containing two molecules each of H2A, H2B, H3 and H4 assembled in one H3-H4 heterotetramer and two H2A-H2B heterodimers. The octamer wraps approximately 147 bp of DNA. In terms of processing, monoubiquitination of Lys-120 (H2AK119Ub) gives a specific tag for epigenetic transcriptional repression. Following DNA double-strand breaks (DSBs), it is ubiquitinated through 'Lys-63' linkage of ubiquitin moieties, leading to the recruitment of repair proteins to sites of DNA damage. H2AK119Ub and ionizing radiation-induced 'Lys-63'-linked ubiquitination are distinct events. Phosphorylation on Ser-2 is enhanced during mitosis. Phosphorylation on Ser-2 directly represses transcription. Post-translationally, glutamine methylation at Gln-105 (H2AQ104me) by FBL is specifically dedicated to polymerase I. It is present at 35S ribosomal DNA locus and impairs binding of the FACT complex.

It localises to the nucleus. It is found in the chromosome. Core component of nucleosome. Nucleosomes wrap and compact DNA into chromatin, limiting DNA accessibility to the cellular machineries which require DNA as a template. Histones thereby play a central role in transcription regulation, DNA repair, DNA replication and chromosomal stability. DNA accessibility is regulated via a complex set of post-translational modifications of histones, also called histone code, and nucleosome remodeling. The polypeptide is Histone H2A type 1 (Xenopus laevis (African clawed frog)).